We begin with the raw amino-acid sequence, 436 residues long: MANIFEVPNPGNDLLEKADKVRLASIKISQTENIDRIKALNFMADCLEKNSKEILEANSADYSSAEKKGISRALLSRLKLSKAKLNSGIEGVRKVGELADPVNQIQIKRELSNGLILERKTVPIGVLGVIFESRPDAVMQISSLAIRSGNGVILKGGSEANLTNTSIVKALQEGLDESGLDKNAICLLTSRKDSMAMLNLEKYINLIIPRGSNELVKFIQENTRIPVLGHADGICHLFIDIEANLEMALSVALDSKIQYPAACNAIETLLVHKDIAPAFLEKAIPLFNSNDVKLIGDRKSVELGLEHEASAEDWQTEYLDLILSIKIVDDLDEAIIHIQKYSSKHTDGIITENLKTANRFMNVVDSAGVFHNCSTRFADGFRYGFGAEVGISTQTLPPRGPVGLEGLVTYKYFLKGDGNIVDDFSLGKAIYTHKDL.

It belongs to the gamma-glutamyl phosphate reductase family.

It is found in the cytoplasm. The catalysed reaction is L-glutamate 5-semialdehyde + phosphate + NADP(+) = L-glutamyl 5-phosphate + NADPH + H(+). The protein operates within amino-acid biosynthesis; L-proline biosynthesis; L-glutamate 5-semialdehyde from L-glutamate: step 2/2. Its function is as follows. Catalyzes the NADPH-dependent reduction of L-glutamate 5-phosphate into L-glutamate 5-semialdehyde and phosphate. The product spontaneously undergoes cyclization to form 1-pyrroline-5-carboxylate. The sequence is that of Gamma-glutamyl phosphate reductase from Prochlorococcus marinus (strain MIT 9301).